Here is a 317-residue protein sequence, read N- to C-terminus: Ferrochelatase (317 aa).

The Fe cation site is built by His192 and Glu271.

Belongs to the ferrochelatase family.

Its subcellular location is the cytoplasm. It carries out the reaction heme b + 2 H(+) = protoporphyrin IX + Fe(2+). The protein operates within porphyrin-containing compound metabolism; protoheme biosynthesis; protoheme from protoporphyrin-IX: step 1/1. Catalyzes the ferrous insertion into protoporphyrin IX. The sequence is that of Ferrochelatase from Geobacter metallireducens (strain ATCC 53774 / DSM 7210 / GS-15).